The primary structure comprises 881 residues: Leucine--tRNA ligase (881 aa).

The 'HIGH' region signature appears at 48-58 (PYPSGKLHMGH). The 'KMSKS' region motif lies at 638 to 642 (KMSKS). Residue Lys641 participates in ATP binding.

The protein belongs to the class-I aminoacyl-tRNA synthetase family.

The protein resides in the cytoplasm. The enzyme catalyses tRNA(Leu) + L-leucine + ATP = L-leucyl-tRNA(Leu) + AMP + diphosphate. This Janthinobacterium sp. (strain Marseille) (Minibacterium massiliensis) protein is Leucine--tRNA ligase.